The sequence spans 124 residues: Small ribosomal subunit protein uS12 (124 aa).

At aspartate 89 the chain carries 3-methylthioaspartic acid.

It belongs to the universal ribosomal protein uS12 family. As to quaternary structure, part of the 30S ribosomal subunit. Contacts proteins S8 and S17. May interact with IF1 in the 30S initiation complex.

In terms of biological role, with S4 and S5 plays an important role in translational accuracy. Interacts with and stabilizes bases of the 16S rRNA that are involved in tRNA selection in the A site and with the mRNA backbone. Located at the interface of the 30S and 50S subunits, it traverses the body of the 30S subunit contacting proteins on the other side and probably holding the rRNA structure together. The combined cluster of proteins S8, S12 and S17 appears to hold together the shoulder and platform of the 30S subunit. The polypeptide is Small ribosomal subunit protein uS12 (Yersinia pestis (strain Pestoides F)).